Consider the following 370-residue polypeptide: Anhydro-N-acetylmuramic acid kinase (370 aa).

13-20 (GTSMDGVD) is a binding site for ATP.

Belongs to the anhydro-N-acetylmuramic acid kinase family.

The enzyme catalyses 1,6-anhydro-N-acetyl-beta-muramate + ATP + H2O = N-acetyl-D-muramate 6-phosphate + ADP + H(+). It participates in amino-sugar metabolism; 1,6-anhydro-N-acetylmuramate degradation. Its pathway is cell wall biogenesis; peptidoglycan recycling. Functionally, catalyzes the specific phosphorylation of 1,6-anhydro-N-acetylmuramic acid (anhMurNAc) with the simultaneous cleavage of the 1,6-anhydro ring, generating MurNAc-6-P. Is required for the utilization of anhMurNAc either imported from the medium or derived from its own cell wall murein, and thus plays a role in cell wall recycling. The polypeptide is Anhydro-N-acetylmuramic acid kinase (Vibrio parahaemolyticus serotype O3:K6 (strain RIMD 2210633)).